Here is a 239-residue protein sequence, read N- to C-terminus: Ribosomal RNA small subunit methyltransferase G (239 aa).

Residues G105, L110, 156–157, and R169 each bind S-adenosyl-L-methionine; that span reads VE.

The protein belongs to the methyltransferase superfamily. RNA methyltransferase RsmG family.

Its subcellular location is the cytoplasm. It carries out the reaction guanosine(527) in 16S rRNA + S-adenosyl-L-methionine = N(7)-methylguanosine(527) in 16S rRNA + S-adenosyl-L-homocysteine. Its function is as follows. Specifically methylates the N7 position of guanine in position 527 of 16S rRNA. The sequence is that of Ribosomal RNA small subunit methyltransferase G from Verminephrobacter eiseniae (strain EF01-2).